A 352-amino-acid chain; its full sequence is Heat-inducible transcription repressor HrcA (352 aa).

Belongs to the HrcA family.

Negative regulator of class I heat shock genes (grpE-dnaK-dnaJ and groELS operons). Prevents heat-shock induction of these operons. This chain is Heat-inducible transcription repressor HrcA, found in Latilactobacillus sakei subsp. sakei (strain 23K) (Lactobacillus sakei subsp. sakei).